The following is a 123-amino-acid chain: Small ribosomal subunit protein uS12c (123 aa).

It belongs to the universal ribosomal protein uS12 family. Part of the 30S ribosomal subunit.

It localises to the plastid. Its subcellular location is the chloroplast. Functionally, with S4 and S5 plays an important role in translational accuracy. Located at the interface of the 30S and 50S subunits. This chain is Small ribosomal subunit protein uS12c (rps12), found in Oenothera elata subsp. hookeri (Hooker's evening primrose).